Consider the following 89-residue polypeptide: Chromosomal protein MC1a (89 aa).

Functionally, protects DNA against thermal denaturation and modulates transcription. The protein is Chromosomal protein MC1a of Methanothrix soehngenii (Methanosaeta concilii).